The following is a 635-amino-acid chain: BTB/POZ domain-containing protein SETH6 (635 aa).

In terms of domain architecture, BTB spans 39-104 (SDLTIEVGSA…CYGVGVQYNS (66 aa)). The NPH3 domain occupies 206–494 (DWWGRSLPIL…VQVLFYEQTR (289 aa)). Position 435 is a phosphotyrosine (Tyr435). Residues 604-635 (QSVASSGKKHTEEKTNSERRFMFQKRRCHSVS) are disordered. The segment covering 612–624 (KHTEEKTNSERRF) has biased composition (basic and acidic residues). The span at 625–635 (MFQKRRCHSVS) shows a compositional bias: basic residues.

The protein belongs to the NPH3 family.

The protein operates within protein modification; protein ubiquitination. In terms of biological role, may act as a substrate-specific adapter of an E3 ubiquitin-protein ligase complex (CUL3-RBX1-BTB) which mediates the ubiquitination and subsequent proteasomal degradation of target proteins. The chain is BTB/POZ domain-containing protein SETH6 (SETH6) from Arabidopsis thaliana (Mouse-ear cress).